The sequence spans 508 residues: NADH-quinone oxidoreductase subunit N 1 (508 aa).

Helical transmembrane passes span 2-22, 47-67, 87-107, 126-146, 175-195, 220-240, 260-280, 291-311, 321-341, 351-371, 396-416, 431-453, and 479-499; these read ILGPYIAVSPLIVISLGGALL, ALGTAITLLAGAVFSGAVGFV, FTLFFSFVLCLGGALAALLAG, FSTVGAIILAGAGDLLTLFLG, FLLGSFAAALLLYGGALIYGA, ALLLIGAALVLVGLAFKVSAV, FMAVAVKGAAFATLLRVLLGA, AGWPPAVAVMALLTMTVANLI, MLAYSSIAHAGYLLVGVAATV, VMFYLLAYTVSTVGAFGTLIL, ALAFSLFLLSLAGVPPTAGFF, YTLSVALLLNSVLSAYYYLRVLV, and LVVSAVLVMVLGIWPTTSLGI.

It belongs to the complex I subunit 2 family. As to quaternary structure, NDH-1 is composed of 14 different subunits. Subunits NuoA, H, J, K, L, M, N constitute the membrane sector of the complex.

The protein localises to the cell inner membrane. The enzyme catalyses a quinone + NADH + 5 H(+)(in) = a quinol + NAD(+) + 4 H(+)(out). NDH-1 shuttles electrons from NADH, via FMN and iron-sulfur (Fe-S) centers, to quinones in the respiratory chain. The immediate electron acceptor for the enzyme in this species is believed to be ubiquinone. Couples the redox reaction to proton translocation (for every two electrons transferred, four hydrogen ions are translocated across the cytoplasmic membrane), and thus conserves the redox energy in a proton gradient. The sequence is that of NADH-quinone oxidoreductase subunit N 1 from Sorangium cellulosum (strain So ce56) (Polyangium cellulosum (strain So ce56)).